We begin with the raw amino-acid sequence, 168 residues long: Ribosome maturation factor RimM (168 aa).

The PRC barrel domain occupies 95-168 (EEGYYWSDLI…RITVDWGLDY (74 aa)).

This sequence belongs to the RimM family. In terms of assembly, binds ribosomal protein uS19.

Its subcellular location is the cytoplasm. Functionally, an accessory protein needed during the final step in the assembly of 30S ribosomal subunit, possibly for assembly of the head region. Essential for efficient processing of 16S rRNA. May be needed both before and after RbfA during the maturation of 16S rRNA. It has affinity for free ribosomal 30S subunits but not for 70S ribosomes. This Nitrosospira multiformis (strain ATCC 25196 / NCIMB 11849 / C 71) protein is Ribosome maturation factor RimM.